The chain runs to 495 residues: MVSEITHKSYPLHFVLFPFMAQGHMIPMVDIARLLAQRGVKITIVTTPHNAARFKNVLSRAIESGLPISIVQVKLPSQEAGLPEGNETLDSLVSMELMIHFLKAVNMLEEPVQKLFEEMSPQPSCIISDFCLPYTSKIAKKFNIPKILFHGMCCFCLLCMHILRKNREIVENLKSDKEHFVVPYFPDRVEFTRPQVPVATYVPGDWHEITEDMVEADKTSYGVIVNTYQELEPAYANDYKEARSGKAWTIGPVSLCNKVGADKAERGNKADIDQDECLKWLNSKEEGSVLYVCLGSICNLPLSQLKELGLGLEESQRPFIWVIRGWEKNKELHEWFSESGFEERIKDRGLLIKGWAPQMLILSHHSVGGFLTHCGWNSTLEGLTAGLPLLTWPLFADQFCNEKLAVQVLKAGVSAGVDQPMKWGEEEKIGVLVDKEGVKKAVEELMGESDDAKEIRRRAKELGELAHKAVEEGGSSHSNITSLLEDIMQLAQSNN.

The Proton acceptor role is filled by histidine 24. Histidine 24 is a binding site for an anthocyanidin. The active-site Charge relay is aspartate 129. UDP-alpha-D-glucose contacts are provided by alanine 356, glutamine 358, histidine 373, tryptophan 376, asparagine 377, serine 378, and glutamate 381. Alanine 396 lines the an anthocyanidin pocket. UDP-alpha-D-glucose contacts are provided by aspartate 397 and glutamine 398.

Belongs to the UDP-glycosyltransferase family.

The catalysed reaction is oleanolate + UDP-alpha-D-glucose = oleanolate 3-O-beta-D-glucoside + UDP + H(+). Catalyzes the transfer of a glucose (Glc) moiety from UDP-Glc to the C-3 position of the oleanane sapogenins oleanolate and hederagenin, and to the C-28 carboxylic group of the lupane sapogenin betulinate. The monoglucosylated hederagenin 3-O-beta-D-glucoside is a feeding deterrent of the yellow-striped flea beetle (Phyllotreta nemorum). The polypeptide is UDP-glycosyltransferase 73C12 (Barbarea vulgaris (Yellow rocket)).